A 303-amino-acid chain; its full sequence is Aspartate carbamoyltransferase catalytic subunit (303 aa).

The carbamoyl phosphate site is built by Arg49 and Thr50. An L-aspartate-binding site is contributed by Lys77. Residues Arg99, His126, and Gln129 each coordinate carbamoyl phosphate. Residues Arg159 and Arg211 each contribute to the L-aspartate site. Ser252 and Pro253 together coordinate carbamoyl phosphate.

It belongs to the aspartate/ornithine carbamoyltransferase superfamily. ATCase family. As to quaternary structure, heterododecamer (2C3:3R2) of six catalytic PyrB chains organized as two trimers (C3), and six regulatory PyrI chains organized as three dimers (R2).

It carries out the reaction carbamoyl phosphate + L-aspartate = N-carbamoyl-L-aspartate + phosphate + H(+). Its pathway is pyrimidine metabolism; UMP biosynthesis via de novo pathway; (S)-dihydroorotate from bicarbonate: step 2/3. In terms of biological role, catalyzes the condensation of carbamoyl phosphate and aspartate to form carbamoyl aspartate and inorganic phosphate, the committed step in the de novo pyrimidine nucleotide biosynthesis pathway. The polypeptide is Aspartate carbamoyltransferase catalytic subunit (Listeria welshimeri serovar 6b (strain ATCC 35897 / DSM 20650 / CCUG 15529 / CIP 8149 / NCTC 11857 / SLCC 5334 / V8)).